We begin with the raw amino-acid sequence, 120 residues long: Large ribosomal subunit protein uL24 (120 aa).

The segment at 1-33 (MTRQPHKQRNRQERAALHEKQKQVRAPLSPELR) is disordered. Residues 10 to 22 (NRQERAALHEKQK) show a composition bias toward basic and acidic residues.

Belongs to the universal ribosomal protein uL24 family. In terms of assembly, part of the 50S ribosomal subunit.

Its function is as follows. One of two assembly initiator proteins, it binds directly to the 5'-end of the 23S rRNA, where it nucleates assembly of the 50S subunit. Located at the polypeptide exit tunnel on the outside of the subunit. This Natronomonas pharaonis (strain ATCC 35678 / DSM 2160 / CIP 103997 / JCM 8858 / NBRC 14720 / NCIMB 2260 / Gabara) (Halobacterium pharaonis) protein is Large ribosomal subunit protein uL24.